The chain runs to 330 residues: tRNA-modifying protein YgfZ (330 aa).

Residues Trp28 and Trp190 each contribute to the folate site.

It belongs to the tRNA-modifying YgfZ family.

The protein resides in the cytoplasm. In terms of biological role, folate-binding protein involved in regulating the level of ATP-DnaA and in the modification of some tRNAs. It is probably a key factor in regulatory networks that act via tRNA modification, such as initiation of chromosomal replication. The protein is tRNA-modifying protein YgfZ of Yersinia pseudotuberculosis serotype IB (strain PB1/+).